The following is a 124-amino-acid chain: Desulfoferrodoxin homolog (124 aa).

Residues cysteine 10, cysteine 13, cysteine 29, cysteine 30, histidine 49, histidine 69, histidine 75, cysteine 117, and histidine 120 each coordinate Fe cation.

This sequence belongs to the desulfoferrodoxin family. Requires Fe(3+) as cofactor. It depends on Cu(2+) as a cofactor.

This Methanothermobacter thermautotrophicus (strain ATCC 29096 / DSM 1053 / JCM 10044 / NBRC 100330 / Delta H) (Methanobacterium thermoautotrophicum) protein is Desulfoferrodoxin homolog.